Consider the following 706-residue polypeptide: Fatty acid oxidation complex subunit alpha (706 aa).

Residues 1 to 188 (MEKTFNLTRR…KMGLVNDVVP (188 aa)) form an enoyl-CoA hydratase region. A 3-hydroxyacyl-CoA dehydrogenase region spans residues 308 to 706 (RKVKKAVILG…TMAQENAHFF (399 aa)).

The protein in the N-terminal section; belongs to the enoyl-CoA hydratase/isomerase family. This sequence in the central section; belongs to the 3-hydroxyacyl-CoA dehydrogenase family. Heterotetramer of two alpha chains (FadJ) and two beta chains (FadI).

Its subcellular location is the cytoplasm. The catalysed reaction is a (3S)-3-hydroxyacyl-CoA = a (2E)-enoyl-CoA + H2O. It catalyses the reaction a 4-saturated-(3S)-3-hydroxyacyl-CoA = a (3E)-enoyl-CoA + H2O. It carries out the reaction a (3S)-3-hydroxyacyl-CoA + NAD(+) = a 3-oxoacyl-CoA + NADH + H(+). The enzyme catalyses (3S)-3-hydroxybutanoyl-CoA = (3R)-3-hydroxybutanoyl-CoA. The protein operates within lipid metabolism; fatty acid beta-oxidation. In terms of biological role, catalyzes the formation of a hydroxyacyl-CoA by addition of water on enoyl-CoA. Also exhibits 3-hydroxyacyl-CoA epimerase and 3-hydroxyacyl-CoA dehydrogenase activities. This is Fatty acid oxidation complex subunit alpha from Shewanella baltica (strain OS155 / ATCC BAA-1091).